Here is a 389-residue protein sequence, read N- to C-terminus: Na(+)/H(+) antiporter NhaA (389 aa).

A run of 11 helical transmembrane segments spans residues 24 to 44 (ILLILCTILSLSIANSLAGPA), 56 to 76 (LSIEHWVNDALMAVFFLFVGL), 94 to 114 (LLPIFAAIGGIGVPALIHYTL), 122 to 142 (AGTGIPMATDIAFALGVLALL), 152 to 172 (VFLTALAVMDDLGAIIVIAMF), 176 to 196 (QFSLVYLLSALAVFGLLLVLN), 216 to 236 (FLMLKSGVHATIAGVLLAFAI), 259 to 279 (PVAFIILPIFALANTGIVIGS), 291 to 311 (LGIIGGLVFGKPLGIALLSFV), 326 to 346 (WTHIVGAGILGGIGFTMSIFI), and 363 to 383 (MAILMASVAAGGLGFLWLSFF).

It belongs to the NhaA Na(+)/H(+) (TC 2.A.33) antiporter family.

The protein resides in the cell inner membrane. The enzyme catalyses Na(+)(in) + 2 H(+)(out) = Na(+)(out) + 2 H(+)(in). Na(+)/H(+) antiporter that extrudes sodium in exchange for external protons. The sequence is that of Na(+)/H(+) antiporter NhaA from Dechloromonas aromatica (strain RCB).